Here is a 396-residue protein sequence, read N- to C-terminus: Elongation factor Tu 1 (396 aa).

Residues 10 to 206 enclose the tr-type G domain; it reads KPHVNVGTIG…ALDSYIPLPE (197 aa). Positions 19 to 26 are G1; that stretch reads GHVDHGKT. 19–26 provides a ligand contact to GTP; the sequence is GHVDHGKT. Mg(2+) is bound at residue Thr-26. Residues 60 to 64 form a G2 region; sequence GITIN. A G3 region spans residues 81-84; it reads DCPG. GTP contacts are provided by residues 81–85 and 136–139; these read DCPGH and NKCD. Residues 136 to 139 are G4; the sequence is NKCD. Positions 174–176 are G5; sequence SAK.

The protein belongs to the TRAFAC class translation factor GTPase superfamily. Classic translation factor GTPase family. EF-Tu/EF-1A subfamily. In terms of assembly, monomer.

It localises to the cytoplasm. It catalyses the reaction GTP + H2O = GDP + phosphate + H(+). Its function is as follows. GTP hydrolase that promotes the GTP-dependent binding of aminoacyl-tRNA to the A-site of ribosomes during protein biosynthesis. The protein is Elongation factor Tu 1 of Albidiferax ferrireducens (strain ATCC BAA-621 / DSM 15236 / T118) (Rhodoferax ferrireducens).